The chain runs to 443 residues: Glutamyl-tRNA reductase (443 aa).

Residues 49–52, S109, 114–116, and Q120 each bind substrate; these read TCNR and ETQ. Catalysis depends on C50, which acts as the Nucleophile. Residue 189-194 participates in NADP(+) binding; the sequence is GAGKMG.

The protein belongs to the glutamyl-tRNA reductase family. Homodimer.

It catalyses the reaction (S)-4-amino-5-oxopentanoate + tRNA(Glu) + NADP(+) = L-glutamyl-tRNA(Glu) + NADPH + H(+). The protein operates within porphyrin-containing compound metabolism; protoporphyrin-IX biosynthesis; 5-aminolevulinate from L-glutamyl-tRNA(Glu): step 1/2. Functionally, catalyzes the NADPH-dependent reduction of glutamyl-tRNA(Glu) to glutamate 1-semialdehyde (GSA). This Bacillus mycoides (strain KBAB4) (Bacillus weihenstephanensis) protein is Glutamyl-tRNA reductase.